Consider the following 666-residue polypeptide: DNA mismatch repair protein MutL (666 aa).

It belongs to the DNA mismatch repair MutL/HexB family.

Functionally, this protein is involved in the repair of mismatches in DNA. It is required for dam-dependent methyl-directed DNA mismatch repair. May act as a 'molecular matchmaker', a protein that promotes the formation of a stable complex between two or more DNA-binding proteins in an ATP-dependent manner without itself being part of a final effector complex. This Clostridium botulinum (strain Okra / Type B1) protein is DNA mismatch repair protein MutL.